The primary structure comprises 440 residues: Gamma-aminobutyric acid receptor subunit pi (440 aa).

The signal sequence occupies residues 1-23; that stretch reads MSYSLYLAFLCLSLLTQRTCIQG. Residues 24–241 are Extracellular-facing; the sequence is NQVNVEVSRS…LVLQFELRRN (218 aa). N-linked (GlcNAc...) asparagine glycans are attached at residues Asn-43, Asn-102, and Asn-145. Cysteines 160 and 174 form a disulfide. Residues Asn-196 and Asn-228 are each glycosylated (N-linked (GlcNAc...) asparagine). A helical transmembrane segment spans residues 242 to 262; that stretch reads VLYFILETYVPSTFLVVLSWV. Over 263 to 270 the chain is Cytoplasmic; that stretch reads SFWISLDS. A helical transmembrane segment spans residues 271 to 290; that stretch reads VPARTCIGVTTVLSMTTLMI. At 291–301 the chain is on the extracellular side; it reads GSRTSLPNTNC. A helical transmembrane segment spans residues 302–322; it reads FIKAIDVYLGICFSFVFGALL. Topologically, residues 323-419 are cytoplasmic; it reads EYAVAHYSSL…NPSNVDRYSK (97 aa). A helical transmembrane segment spans residues 420–440; the sequence is LLFPLIFMLANVFYWAYYMYF.

This sequence belongs to the ligand-gated ion channel (TC 1.A.9) family. Gamma-aminobutyric acid receptor (TC 1.A.9.5) subfamily. GABRP sub-subfamily. As to quaternary structure, heteropentamer, formed by a combination of alpha (GABRA1-6), beta (GABRB1-3), gamma (GABRG1-3), delta (GABRD), epsilon (GABRE), rho (GABRR1-3), pi (GABRP) and theta (GABRQ) chains, each subunit exhibiting distinct physiological and pharmacological properties.

The protein localises to the cell membrane. Its subcellular location is the apical cell membrane. The enzyme catalyses chloride(in) = chloride(out). In terms of biological role, pi subunit of the heteropentameric ligand-gated chloride channel gated by gamma-aminobutyric acid (GABA). GABA-gated chloride channels, also named GABA(A) receptors (GABAAR), consist of five subunits arranged around a central pore and contain GABA active binding site(s) located at the alpha and beta subunit interfaces. When activated by GABA, GABAARs selectively allow the flow of chloride anions across the cell membrane down their electrochemical gradient. Pi-containing GABAARs are mostly located in peripheral tissues. In the uterus, pi subunits modulate uterus contraction by altering the sensitivity of GABAARs to pregnanolone. In the lungs, pi-containing GABAARs contribute to pulmonary fluid transport via luminal secretion of chloride. This Mus musculus (Mouse) protein is Gamma-aminobutyric acid receptor subunit pi.